The chain runs to 160 residues: Small ribosomal subunit protein uS9 (160 aa).

The protein belongs to the universal ribosomal protein uS9 family.

The chain is Small ribosomal subunit protein uS9 from Cereibacter sphaeroides (strain ATCC 17029 / ATH 2.4.9) (Rhodobacter sphaeroides).